A 56-amino-acid polypeptide reads, in one-letter code: Prokaryotic ubiquitin-like protein UBact (56 aa).

The span at 1 to 28 shows a compositional bias: basic and acidic residues; that stretch reads MPQDQQRKKQFDPNPNRDDSQRKTPVDK. The disordered stretch occupies residues 1–33; that stretch reads MPQDQQRKKQFDPNPNRDDSQRKTPVDKEIDDI. The residue at position 56 (Gln-56) is a Deamidated glutamine. Residue Gln-56 forms an Isoglutamyl lysine isopeptide (Gln-Lys) (interchain with K-? in acceptor proteins) linkage.

This sequence belongs to the ubiquitin-like protein UBact family. May be modified by deamidation of its C-terminal glutamine to glutamate by the adjacently encoded deamidase. This could be a prerequisite to the subsequent conjugation, as shown in the other prokaryotic ubiquitin-like protein Pup.

May function as a protein modifier covalently attached to lysine residues of substrate proteins. This may serve to target the modified proteins for degradation by proteasomes. The polypeptide is Prokaryotic ubiquitin-like protein UBact (Yanofskybacteria sp. (strain GW2011_GWA1_39_13)).